We begin with the raw amino-acid sequence, 84 residues long: Exodeoxyribonuclease 7 small subunit (84 aa).

Belongs to the XseB family. As to quaternary structure, heterooligomer composed of large and small subunits.

It localises to the cytoplasm. The catalysed reaction is Exonucleolytic cleavage in either 5'- to 3'- or 3'- to 5'-direction to yield nucleoside 5'-phosphates.. Its function is as follows. Bidirectionally degrades single-stranded DNA into large acid-insoluble oligonucleotides, which are then degraded further into small acid-soluble oligonucleotides. The protein is Exodeoxyribonuclease 7 small subunit of Janthinobacterium sp. (strain Marseille) (Minibacterium massiliensis).